Consider the following 635-residue polypeptide: Two-component response regulator ARR18 (635 aa).

In terms of domain architecture, Response regulatory spans 19–133; the sequence is RVLAVDDNPT…ELQNIWHHVV (115 aa). At Asp70 the chain carries 4-aspartylphosphate. Disordered stretches follow at residues 144–196 and 323–342; these read LPPS…KKPR and IQQGHHQNSSNSANPFGTYH. Acidic residues predominate over residues 166–186; sequence SGDEDDSDREEDDGEGSEQDG. The Nuclear localization signal motif lies at 193–196; that stretch reads KKPR. Positions 196–246 form a DNA-binding region, myb-like GARP; the sequence is RVVWSQELHQKFVSAVQQLGLDKAVPKKILDLMSIEGLTRENVASHLQKYR.

This sequence belongs to the ARR family. Type-B subfamily. In terms of assembly, binds the target DNA as a monomer. Two-component system major event consists of a His-to-Asp phosphorelay between a sensor histidine kinase (HK) and a response regulator (RR). In plants, the His-to-Asp phosphorelay involves an additional intermediate named Histidine-containing phosphotransfer protein (HPt). This multistep phosphorelay consists of a His-Asp-His-Asp sequential transfer of a phosphate group between first a His and an Asp of the HK protein, followed by the transfer to a conserved His of the HPt protein and finally the transfer to an Asp in the receiver domain of the RR protein. Predominantly expressed in young leaf tissue developing anthers, and siliques.

The protein resides in the nucleus. In terms of biological role, transcriptional activator that binds specifically to the DNA sequence 5'-[AG]GATT-3'. Functions as a response regulator involved in His-to-Asp phosphorelay signal transduction system. Phosphorylation of the Asp residue in the receiver domain activates the ability of the protein to promote the transcription of target genes. Could directly activate some type-A response regulators in response to cytokinins. This Arabidopsis thaliana (Mouse-ear cress) protein is Two-component response regulator ARR18 (ARR18).